The sequence spans 283 residues: 5'-nucleotidase SurE (283 aa).

Residues aspartate 14, aspartate 15, serine 47, and asparagine 105 each coordinate a divalent metal cation.

This sequence belongs to the SurE nucleotidase family. It depends on a divalent metal cation as a cofactor.

It localises to the cytoplasm. The catalysed reaction is a ribonucleoside 5'-phosphate + H2O = a ribonucleoside + phosphate. Functionally, nucleotidase that shows phosphatase activity on nucleoside 5'-monophosphates. This is 5'-nucleotidase SurE from Chlamydia trachomatis serovar D (strain ATCC VR-885 / DSM 19411 / UW-3/Cx).